A 476-amino-acid chain; its full sequence is 2-(3-amino-3-carboxypropyl)histidine synthase subunit 2 (476 aa).

The span at 1-15 (MTESAPSAFFTTSTP) shows a compositional bias: polar residues. The disordered stretch occupies residues 1–24 (MTESAPSAFFTTSTPADHVHEEES). Residues Cys102, Cys123, and Cys347 each coordinate [4Fe-4S] cluster. The disordered stretch occupies residues 451-476 (DGVSTAEDSTKMGEGRSGIAQGYSGK).

This sequence belongs to the DPH1/DPH2 family. DPH2 subfamily. In terms of assembly, component of the 2-(3-amino-3-carboxypropyl)histidine synthase complex composed of dph-1, dph-2, dph-3 and a NADH-dependent reductase. [4Fe-4S] cluster serves as cofactor.

It functions in the pathway protein modification; peptidyl-diphthamide biosynthesis. Its function is as follows. Required for the first step of diphthamide biosynthesis, a post-translational modification of histidine which occurs in elongation factor 2. Dph-1 and dph-2 transfer a 3-amino-3-carboxypropyl (ACP) group from S-adenosyl-L-methionine (SAM) to a histidine residue, the reaction is assisted by a reduction system comprising dph-3 and a NADH-dependent reductase. Facilitates the reduction of the catalytic iron-sulfur cluster found in the dph-1 subunit. The sequence is that of 2-(3-amino-3-carboxypropyl)histidine synthase subunit 2 (dph-2) from Caenorhabditis elegans.